Reading from the N-terminus, the 395-residue chain is S-adenosylmethionine synthase (395 aa).

Residue His-16 participates in ATP binding. Asp-18 serves as a coordination point for Mg(2+). Glu-44 provides a ligand contact to K(+). Positions 57 and 100 each coordinate L-methionine. The flexible loop stretch occupies residues 100-110 (QSPDIAQGVDR). ATP-binding positions include 167 to 169 (DAK), 233 to 234 (RF), Asp-242, 248 to 249 (RK), Ala-265, and Lys-269. Asp-242 serves as a coordination point for L-methionine. Lys-273 contributes to the L-methionine binding site.

This sequence belongs to the AdoMet synthase family. In terms of assembly, homotetramer; dimer of dimers. It depends on Mg(2+) as a cofactor. K(+) serves as cofactor.

It localises to the cytoplasm. The enzyme catalyses L-methionine + ATP + H2O = S-adenosyl-L-methionine + phosphate + diphosphate. Its pathway is amino-acid biosynthesis; S-adenosyl-L-methionine biosynthesis; S-adenosyl-L-methionine from L-methionine: step 1/1. In terms of biological role, catalyzes the formation of S-adenosylmethionine (AdoMet) from methionine and ATP. The overall synthetic reaction is composed of two sequential steps, AdoMet formation and the subsequent tripolyphosphate hydrolysis which occurs prior to release of AdoMet from the enzyme. In Burkholderia cenocepacia (strain HI2424), this protein is S-adenosylmethionine synthase.